The chain runs to 527 residues: Probable bifunctional methylthioribulose-1-phosphate dehydratase/enolase-phosphatase E1 (527 aa).

A methylthioribulose-1-phosphate dehydratase region spans residues 1–244 (MAAAAAPAVA…AIKLHQLGLD (244 aa)). Cys-116 contacts substrate. Zn(2+) is bound by residues His-134 and His-136. Glu-159 acts as the Proton donor/acceptor; for methylthioribulose-1-phosphate dehydratase activity in catalysis. Residue His-209 coordinates Zn(2+). The interval 288 to 527 (IVLDIEGTTT…FKTINSLSEI (240 aa)) is enolase-phosphatase E1. Residues Asp-291 and Glu-293 each contribute to the Mg(2+) site. Residues 426 to 427 (SS) and Lys-460 contribute to the substrate site. A Mg(2+)-binding site is contributed by Asp-486.

The protein in the N-terminal section; belongs to the aldolase class II family. MtnB subfamily. This sequence in the C-terminal section; belongs to the HAD-like hydrolase superfamily. MasA/MtnC family. Zn(2+) is required as a cofactor. The cofactor is Mg(2+).

The enzyme catalyses 5-(methylsulfanyl)-D-ribulose 1-phosphate = 5-methylsulfanyl-2,3-dioxopentyl phosphate + H2O. It catalyses the reaction 5-methylsulfanyl-2,3-dioxopentyl phosphate + H2O = 1,2-dihydroxy-5-(methylsulfanyl)pent-1-en-3-one + phosphate. It participates in amino-acid biosynthesis; L-methionine biosynthesis via salvage pathway; L-methionine from S-methyl-5-thio-alpha-D-ribose 1-phosphate: step 2/6. Its pathway is amino-acid biosynthesis; L-methionine biosynthesis via salvage pathway; L-methionine from S-methyl-5-thio-alpha-D-ribose 1-phosphate: step 3/6. The protein operates within amino-acid biosynthesis; L-methionine biosynthesis via salvage pathway; L-methionine from S-methyl-5-thio-alpha-D-ribose 1-phosphate: step 4/6. The sequence is that of Probable bifunctional methylthioribulose-1-phosphate dehydratase/enolase-phosphatase E1 from Ricinus communis (Castor bean).